The primary structure comprises 342 residues: tRNA N6-adenosine threonylcarbamoyltransferase (342 aa).

Fe cation is bound by residues His-115 and His-119. Substrate-binding positions include 138–142 (LVSGG), Asp-171, Gly-184, and Asn-276. Position 304 (Asp-304) interacts with Fe cation.

Belongs to the KAE1 / TsaD family. Fe(2+) is required as a cofactor.

It is found in the cytoplasm. It carries out the reaction L-threonylcarbamoyladenylate + adenosine(37) in tRNA = N(6)-L-threonylcarbamoyladenosine(37) in tRNA + AMP + H(+). Its function is as follows. Required for the formation of a threonylcarbamoyl group on adenosine at position 37 (t(6)A37) in tRNAs that read codons beginning with adenine. Is involved in the transfer of the threonylcarbamoyl moiety of threonylcarbamoyl-AMP (TC-AMP) to the N6 group of A37, together with TsaE and TsaB. TsaD likely plays a direct catalytic role in this reaction. The polypeptide is tRNA N6-adenosine threonylcarbamoyltransferase (Dichelobacter nodosus (strain VCS1703A)).